A 191-amino-acid chain; its full sequence is dCTP deaminase, dUMP-forming (191 aa).

DCTP-binding positions include 101–106, D119, 127–129, Q148, Y162, and Q174; these read KSSLGR and TLE. Residue E129 is the Proton donor/acceptor of the active site.

This sequence belongs to the dCTP deaminase family. Homotrimer.

It carries out the reaction dCTP + 2 H2O = dUMP + NH4(+) + diphosphate. Its pathway is pyrimidine metabolism; dUMP biosynthesis; dUMP from dCTP: step 1/1. Bifunctional enzyme that catalyzes both the deamination of dCTP to dUTP and the hydrolysis of dUTP to dUMP without releasing the toxic dUTP intermediate. This is dCTP deaminase, dUMP-forming from Streptomyces avermitilis (strain ATCC 31267 / DSM 46492 / JCM 5070 / NBRC 14893 / NCIMB 12804 / NRRL 8165 / MA-4680).